We begin with the raw amino-acid sequence, 234 residues long: Leucyl/phenylalanyl-tRNA--protein transferase (234 aa).

This sequence belongs to the L/F-transferase family.

It localises to the cytoplasm. It catalyses the reaction N-terminal L-lysyl-[protein] + L-leucyl-tRNA(Leu) = N-terminal L-leucyl-L-lysyl-[protein] + tRNA(Leu) + H(+). It carries out the reaction N-terminal L-arginyl-[protein] + L-leucyl-tRNA(Leu) = N-terminal L-leucyl-L-arginyl-[protein] + tRNA(Leu) + H(+). The catalysed reaction is L-phenylalanyl-tRNA(Phe) + an N-terminal L-alpha-aminoacyl-[protein] = an N-terminal L-phenylalanyl-L-alpha-aminoacyl-[protein] + tRNA(Phe). Its function is as follows. Functions in the N-end rule pathway of protein degradation where it conjugates Leu, Phe and, less efficiently, Met from aminoacyl-tRNAs to the N-termini of proteins containing an N-terminal arginine or lysine. The chain is Leucyl/phenylalanyl-tRNA--protein transferase from Hahella chejuensis (strain KCTC 2396).